The following is a 1050-amino-acid chain: Diacylglycerol kinase iota (1050 aa).

3 disordered regions span residues 53-74 (PSSS…GSGA), 92-111 (AAAA…EKEE), and 328-356 (SLKA…ETKG). A compositionally biased stretch (low complexity) spans 92 to 105 (AAAAAALEEPAAAG). Basic residues predominate over residues 332–347 (SNRKKKRTSFKRKASK). A DAGKc domain is found at 367–502 (PLMKPLLVFV…DRWNLHVERN (136 aa)). ANK repeat units follow at residues 943-972 (GHCS…AELL) and 979-1008 (TGET…SLRQ). The PDZ-binding signature appears at 1048–1050 (TAV).

This sequence belongs to the eukaryotic diacylglycerol kinase family. As to quaternary structure, interacts (via PDZ-binding motif) with DLG4; controls the localization of DGKI to the synapse. Interacts (via PDZ-binding motif) with DLG1. Interacts (via PDZ-binding motif) with DLG2. Interacts (via PDZ-binding motif) with DLG3. May interact with RASGRP3; involved in the regulation of RASGRP3 activity. In terms of tissue distribution, in brain, expressed in the hippocampus and cerebellum with stronger expression in the Purkinje cell layer (at protein level). Expressed in kidney.

It localises to the cell projection. The protein resides in the axon. It is found in the dendrite. The protein localises to the presynapse. Its subcellular location is the postsynapse. It localises to the postsynaptic density. The protein resides in the synaptic cell membrane. It is found in the cytoplasmic vesicle. The protein localises to the secretory vesicle. Its subcellular location is the synaptic vesicle membrane. It localises to the cytoplasm. The protein resides in the cytosol. It is found in the nucleus. The catalysed reaction is a 1,2-diacyl-sn-glycerol + ATP = a 1,2-diacyl-sn-glycero-3-phosphate + ADP + H(+). The enzyme catalyses 1,2-di-(9Z-octadecenoyl)-sn-glycerol + ATP = 1,2-di-(9Z-octadecenoyl)-sn-glycero-3-phosphate + ADP + H(+). It carries out the reaction 1-octadecanoyl-2-(5Z,8Z,11Z,14Z-eicosatetraenoyl)-sn-glycerol + ATP = 1-octadecanoyl-2-(5Z,8Z,11Z,14Z-eicosatetraenoyl)-sn-glycero-3-phosphate + ADP + H(+). It catalyses the reaction 1-octadecanoyl-2-(9Z,12Z)-octadecadienoyl-sn-glycerol + ATP = 1-octadecanoyl-2-(9Z,12Z-octadecadienoyl)-sn-glycero-3-phosphate + ADP + H(+). It functions in the pathway lipid metabolism; glycerolipid metabolism. Its function is as follows. Diacylglycerol kinase that converts diacylglycerol/DAG into phosphatidic acid/phosphatidate/PA and regulates the respective levels of these two bioactive lipids. Thereby, acts as a central switch between the signaling pathways activated by these second messengers with different cellular targets and opposite effects in numerous biological processes. Has probably no preference for any of the diacylglycerols in terms of the acyl chain composition, especially for the acyl chain at the sn-2 position. By controlling the diacylglycerol/DAG-mediated activation of RASGRP3, negatively regulates the Rap1 signaling pathway. May play a role in presynaptic diacylglycerol/DAG signaling and control neurotransmitter release during metabotropic glutamate receptor-dependent long-term depression. This chain is Diacylglycerol kinase iota, found in Mus musculus (Mouse).